The chain runs to 356 residues: DNA polymerase IV (356 aa).

The UmuC domain occupies 7 to 187; it reads IIHVDMDAFY…LPVNRVPGVG (181 aa). 2 residues coordinate Mg(2+): D11 and D105. E106 is an active-site residue.

Belongs to the DNA polymerase type-Y family. As to quaternary structure, monomer. The cofactor is Mg(2+).

The protein resides in the cytoplasm. The catalysed reaction is DNA(n) + a 2'-deoxyribonucleoside 5'-triphosphate = DNA(n+1) + diphosphate. Functionally, poorly processive, error-prone DNA polymerase involved in untargeted mutagenesis. Copies undamaged DNA at stalled replication forks, which arise in vivo from mismatched or misaligned primer ends. These misaligned primers can be extended by PolIV. Exhibits no 3'-5' exonuclease (proofreading) activity. May be involved in translesional synthesis, in conjunction with the beta clamp from PolIII. The polypeptide is DNA polymerase IV (Stenotrophomonas maltophilia (strain R551-3)).